A 62-amino-acid chain; its full sequence is UPF0434 protein FTM_0733 (62 aa).

Belongs to the UPF0434 family.

This chain is UPF0434 protein FTM_0733, found in Francisella tularensis subsp. mediasiatica (strain FSC147).